The primary structure comprises 354 residues: NADH-quinone oxidoreductase subunit H (354 aa).

8 helical membrane passes run 23 to 43 (LVRA…LILW), 91 to 111 (YIIA…VIPF), 124 to 144 (LLYV…AGWA), 162 to 182 (ISYE…TGSL), 203 to 223 (ILSW…ISGV), 250 to 270 (GMAF…ISAL), 291 to 311 (IPGF…FIWL), and 330 to 350 (IFIP…VSPW).

Belongs to the complex I subunit 1 family. NDH-1 is composed of 14 different subunits. Subunits NuoA, H, J, K, L, M, N constitute the membrane sector of the complex.

It is found in the cell inner membrane. The enzyme catalyses a quinone + NADH + 5 H(+)(in) = a quinol + NAD(+) + 4 H(+)(out). NDH-1 shuttles electrons from NADH, via FMN and iron-sulfur (Fe-S) centers, to quinones in the respiratory chain. The immediate electron acceptor for the enzyme in this species is believed to be ubiquinone. Couples the redox reaction to proton translocation (for every two electrons transferred, four hydrogen ions are translocated across the cytoplasmic membrane), and thus conserves the redox energy in a proton gradient. This subunit may bind ubiquinone. The sequence is that of NADH-quinone oxidoreductase subunit H from Ralstonia pickettii (strain 12J).